The following is a 284-amino-acid chain: Ubiquinone biosynthesis protein COQ4, mitochondrial (284 aa).

Zn(2+)-binding residues include His165, Asp166, His169, and Glu181.

Belongs to the COQ4 family. In terms of assembly, component of a multi-subunit COQ enzyme complex, composed of at least COQ3, COQ4, COQ5, COQ6, COQ7 and COQ9. The cofactor is Zn(2+).

The protein localises to the mitochondrion inner membrane. The catalysed reaction is a 4-hydroxy-3-methoxy-5-(all-trans-polyprenyl)benzoate + H(+) = a 2-methoxy-6-(all-trans-polyprenyl)phenol + CO2. It functions in the pathway cofactor biosynthesis; ubiquinone biosynthesis. Lyase that catalyzes the C1-decarboxylation of 4-hydroxy-3-methoxy-5-(all-trans-polyprenyl)benzoic acid into 2-methoxy-6-(all-trans-polyprenyl)phenol during ubiquinone biosynthesis. The protein is Ubiquinone biosynthesis protein COQ4, mitochondrial of Ajellomyces dermatitidis (strain ER-3 / ATCC MYA-2586) (Blastomyces dermatitidis).